Consider the following 272-residue polypeptide: Protein MGF 110-11L (272 aa).

Residues 1–17 (MKVLLGLLLGYSVLILA) traverse the membrane as a helical segment. Asparagine 68 carries N-linked (GlcNAc...) asparagine; by host glycosylation. The next 2 membrane-spanning stretches (helical) occupy residues 129–149 (QFCLYFIIGIAYTGCFVCALC) and 156–176 (TTMKLFILLSILVWLAQPVLN). N-linked (GlcNAc...) asparagine; by host glycosylation occurs at asparagine 264.

This sequence belongs to the asfivirus MGF 110 family.

It localises to the host membrane. Its function is as follows. Plays a role in virus cell tropism, and may be required for efficient virus replication in macrophages. This chain is Protein MGF 110-11L, found in Ornithodoros (relapsing fever ticks).